Reading from the N-terminus, the 430-residue chain is Histidinol dehydrogenase (430 aa).

The substrate site is built by Ser-237, Gln-259, and His-262. The Zn(2+) site is built by Gln-259 and His-262. Residues Glu-327 and His-328 each act as proton acceptor in the active site. Substrate-binding residues include His-328, Asp-361, Glu-415, and His-420. Zn(2+) is bound at residue Asp-361. His-420 contacts Zn(2+).

It belongs to the histidinol dehydrogenase family. Zn(2+) serves as cofactor.

The catalysed reaction is L-histidinol + 2 NAD(+) + H2O = L-histidine + 2 NADH + 3 H(+). Its pathway is amino-acid biosynthesis; L-histidine biosynthesis; L-histidine from 5-phospho-alpha-D-ribose 1-diphosphate: step 9/9. Its function is as follows. Catalyzes the sequential NAD-dependent oxidations of L-histidinol to L-histidinaldehyde and then to L-histidine. The protein is Histidinol dehydrogenase of Sulfurimonas denitrificans (strain ATCC 33889 / DSM 1251) (Thiomicrospira denitrificans (strain ATCC 33889 / DSM 1251)).